The primary structure comprises 354 residues: Sorbitol dehydrogenase (354 aa).

A Zn(2+)-binding site is contributed by cysteine 43. Residue tyrosine 49 coordinates substrate. Residues histidine 67 and glutamate 68 each coordinate Zn(2+). Glutamate 153 is a binding site for substrate. Residues isoleucine 181, aspartate 201, and arginine 206 each coordinate NAD(+). Residues serine 208 and serine 222 each carry the phosphoserine modification. NAD(+)-binding positions include 270–272 (VGL) and 294–296 (VFR). 2 residues coordinate substrate: arginine 296 and tyrosine 297.

The protein belongs to the zinc-containing alcohol dehydrogenase family. Homotetramer. Zn(2+) is required as a cofactor. As to expression, expressed in liver.

The protein resides in the mitochondrion membrane. The protein localises to the cell projection. It localises to the cilium. It is found in the flagellum. The catalysed reaction is xylitol + NAD(+) = D-xylulose + NADH + H(+). It catalyses the reaction L-iditol + NAD(+) = keto-L-sorbose + NADH + H(+). It carries out the reaction keto-D-fructose + NADH + H(+) = D-sorbitol + NAD(+). Functionally, polyol dehydrogenase that catalyzes the reversible NAD(+)-dependent oxidation of various sugar alcohols. Is mostly active with xylitol, L-iditol and D-sorbitol (D-glucitol) as substrates, leading to the C2-oxidized products D-xylulose, L-sorbose and D-fructose, respectively. Is a key enzyme in the polyol pathway that interconverts glucose and fructose via sorbitol, which constitutes an important alternate route for glucose metabolism. May play a role in sperm motility by using sorbitol as an alternative energy source for sperm motility. The protein is Sorbitol dehydrogenase (SORD) of Ovis aries (Sheep).